The chain runs to 188 residues: Elongation factor P (188 aa).

It belongs to the elongation factor P family.

It is found in the cytoplasm. It participates in protein biosynthesis; polypeptide chain elongation. Its function is as follows. Involved in peptide bond synthesis. Stimulates efficient translation and peptide-bond synthesis on native or reconstituted 70S ribosomes in vitro. Probably functions indirectly by altering the affinity of the ribosome for aminoacyl-tRNA, thus increasing their reactivity as acceptors for peptidyl transferase. This Bradyrhizobium diazoefficiens (strain JCM 10833 / BCRC 13528 / IAM 13628 / NBRC 14792 / USDA 110) protein is Elongation factor P.